Here is a 395-residue protein sequence, read N- to C-terminus: Membrane glycoprotein spo14 (395 aa).

Topologically, residues 1–346 (MAELHLSFPA…KLEDAGVILR (346 aa)) are cytoplasmic. WD repeat units lie at residues 250-285 (MIRD…RFMS) and 290-326 (KLSQ…CLQF). The helical; Signal-anchor for type II membrane protein transmembrane segment at 347–367 (LSLMFPFVLAILYFYLQLLFP) threads the bilayer. Residues 368 to 395 (DEKLDAIHRFFSFILHIFSKYTIRNYDL) lie on the Lumenal side of the membrane.

The protein localises to the endoplasmic reticulum membrane. The protein resides in the golgi apparatus. It localises to the cis-Golgi network membrane. Functionally, required for the formation of transport vesicles from the ER. This function involves the cytoplasmic domain of the protein, which is thought to interact with the small GTP-binding protein sar1. In Schizosaccharomyces pombe (strain 972 / ATCC 24843) (Fission yeast), this protein is Membrane glycoprotein spo14 (spo14).